Reading from the N-terminus, the 225-residue chain is Vacuolar protein sorting-associated protein 2 homolog 1 (225 aa).

Residues alanine 13–glutamine 54 adopt a coiled-coil conformation.

The protein belongs to the SNF7 family. As to quaternary structure, component of the endosomal sorting required for transport complex III (ESCRT-III), composed at least of VPS2, VPS20, VPS24 and VPS32. Interacts with SKD1.

The protein localises to the endosome. Its function is as follows. Component of the ESCRT-III complex, which is required for multivesicular bodies (MVBs) formation and sorting of endosomal cargo proteins into MVBs. The ESCRT-III complex is probably involved in the concentration of MVB cargo. This chain is Vacuolar protein sorting-associated protein 2 homolog 1 (VPS2.1), found in Arabidopsis thaliana (Mouse-ear cress).